The chain runs to 184 residues: Phosphodiesterase YfcE (184 aa).

Asp-9, His-11, Asp-37, Asn-73, His-105, His-127, and His-129 together coordinate Mn(2+).

The protein belongs to the metallophosphoesterase superfamily. YfcE family. Mn(2+) serves as cofactor.

Shows phosphodiesterase activity. This is Phosphodiesterase YfcE (yfcE) from Escherichia coli O157:H7.